A 275-amino-acid chain; its full sequence is Large ribosomal subunit protein uL2 (275 aa).

Disordered stretches follow at residues 24 to 48 (LTTDRPHKPLTKTKQRTGGRRNAGD) and 224 to 264 (VMNP…NKRT). The segment covering 31-42 (KPLTKTKQRTGG) has biased composition (basic residues).

It belongs to the universal ribosomal protein uL2 family. Part of the 50S ribosomal subunit. Forms a bridge to the 30S subunit in the 70S ribosome.

Its function is as follows. One of the primary rRNA binding proteins. Required for association of the 30S and 50S subunits to form the 70S ribosome, for tRNA binding and peptide bond formation. It has been suggested to have peptidyltransferase activity; this is somewhat controversial. Makes several contacts with the 16S rRNA in the 70S ribosome. The sequence is that of Large ribosomal subunit protein uL2 from Koribacter versatilis (strain Ellin345).